A 24-amino-acid chain; its full sequence is Conotoxin PIVF (24 aa).

3 cysteine pairs are disulfide-bonded: C2–C10, C3–C15, and C13–C19. K24 bears the Lysine amide mark.

Belongs to the conotoxin A superfamily. In terms of tissue distribution, expressed by the venom duct.

It is found in the secreted. Functionally, probable neurotoxin with ion channel inhibitor activity. In vivo, elicits dose-dependently excitatory activity upon injection into fish. Its action is slowly reversible. The sequence is that of Conotoxin PIVF from Conus purpurascens (Purple cone).